The primary structure comprises 330 residues: Aspartate--ammonia ligase (330 aa).

This sequence belongs to the class-II aminoacyl-tRNA synthetase family. AsnA subfamily.

Its subcellular location is the cytoplasm. The catalysed reaction is L-aspartate + NH4(+) + ATP = L-asparagine + AMP + diphosphate + H(+). Its pathway is amino-acid biosynthesis; L-asparagine biosynthesis; L-asparagine from L-aspartate (ammonia route): step 1/1. The chain is Aspartate--ammonia ligase from Actinobacillus succinogenes (strain ATCC 55618 / DSM 22257 / CCUG 43843 / 130Z).